The sequence spans 260 residues: Phosphate import ATP-binding protein PstB (260 aa).

An ABC transporter domain is found at isoleucine 14 to isoleucine 255. Glycine 46–serine 53 contributes to the ATP binding site.

The protein belongs to the ABC transporter superfamily. Phosphate importer (TC 3.A.1.7) family. The complex is composed of two ATP-binding proteins (PstB), two transmembrane proteins (PstC and PstA) and a solute-binding protein (PstS).

The protein resides in the cell inner membrane. The enzyme catalyses phosphate(out) + ATP + H2O = ADP + 2 phosphate(in) + H(+). Part of the ABC transporter complex PstSACB involved in phosphate import. Responsible for energy coupling to the transport system. The chain is Phosphate import ATP-binding protein PstB from Borrelia garinii subsp. bavariensis (strain ATCC BAA-2496 / DSM 23469 / PBi) (Borreliella bavariensis).